Here is a 647-residue protein sequence, read N- to C-terminus: Nucleoside triphosphatase I (647 aa).

A Helicase ATP-binding domain is found at 48 to 212; it reads FIGLKNLNSM…NNLIGLLRPN (165 aa). 61–68 contributes to the ATP binding site; the sequence is WDTGTGKT. Residues 150-153 carry the DEXH box motif; that stretch reads DEVH. Residues 378-541 enclose the Helicase C-terminal domain; sequence YIEACRIILN…KINVVFDLLK (164 aa). The segment at 467-533 is binding to the cap-specific mRNA (nucleoside-2'-O-)-methyltransferase; the sequence is DIIILDMPWN…DIIKNKQGKI (67 aa).

This sequence belongs to the helicase family. NPH I subfamily. In terms of assembly, monomer. Interacts (via C-terminus) with RAP94 (via N-terminus). Interacts with the cap-specific mRNA (nucleoside-2'-O-)-methyltransferase.

The protein localises to the virion. The catalysed reaction is a ribonucleoside 5'-triphosphate + H2O = a ribonucleoside 5'-diphosphate + phosphate + H(+). DNA-dependent ATPase required for providing the needed energy to achieve the termination of early transcripts. Acts in concert with the RAP94 subunit of the virion RNA polymerase and the capping enzyme/VTF to catalyze release of UUUUUNU-containing nascent RNA from the elongation complex. NPH-I must bind ssDNA in order to exhibit ATPase activity. In Choristoneura fumiferana (Spruce budworm moth), this protein is Nucleoside triphosphatase I (NPH1).